Consider the following 226-residue polypeptide: Transmembrane emp24 domain-containing protein 5 (226 aa).

The N-terminal stretch at 1 to 24 (MGDKTWLPFPVVLLAALLLPRAAG) is a signal peptide. Topologically, residues 25–193 (FTPSLDSDFT…IQESNFDRVN (169 aa)) are lumenal. A GOLD domain is found at 42–123 (KECFYQPMPL…EKVIFFELIL (82 aa)). A helical membrane pass occupies residues 194 to 214 (FWSMVNLVVMVVVSAIQVYML). Topologically, residues 215–226 (KSLFEDKRKSRT) are cytoplasmic. The Mediates export from ER motif lies at 217–218 (LF).

It belongs to the EMP24/GP25L family. Interacts with TMED9 and TMED10.

It localises to the endoplasmic reticulum membrane. The protein resides in the golgi apparatus. The protein localises to the cis-Golgi network membrane. Its subcellular location is the endoplasmic reticulum-Golgi intermediate compartment membrane. Functionally, potential role in vesicular protein trafficking, mainly in the early secretory pathway. Required for the maintenance of the Golgi apparatus; involved in protein exchange between Golgi stacks during assembly. Probably not required for COPI-vesicle-mediated retrograde transport. This Bos taurus (Bovine) protein is Transmembrane emp24 domain-containing protein 5 (TMED5).